A 616-amino-acid polypeptide reads, in one-letter code: Chaperone protein HtpG (616 aa).

The a; substrate-binding stretch occupies residues 1–333 (MKKQFDTEVN…CQDLPLNVSR (333 aa)). Residues 334-542 (EILQQNKILS…SNDPTYQMQK (209 aa)) form a b region. The c stretch occupies residues 543–616 (IMLSMGQEVK…INEFIEKDFL (74 aa)).

This sequence belongs to the heat shock protein 90 family. As to quaternary structure, homodimer.

It is found in the cytoplasm. In terms of biological role, molecular chaperone. Has ATPase activity. The sequence is that of Chaperone protein HtpG from Borreliella burgdorferi (strain ATCC 35210 / DSM 4680 / CIP 102532 / B31) (Borrelia burgdorferi).